We begin with the raw amino-acid sequence, 1072 residues long: DNA-directed RNA polymerase subunit beta (1072 aa).

This sequence belongs to the RNA polymerase beta chain family. In terms of assembly, in plastids the minimal PEP RNA polymerase catalytic core is composed of four subunits: alpha, beta, beta', and beta''. When a (nuclear-encoded) sigma factor is associated with the core the holoenzyme is formed, which can initiate transcription.

Its subcellular location is the plastid. It is found in the chloroplast. It catalyses the reaction RNA(n) + a ribonucleoside 5'-triphosphate = RNA(n+1) + diphosphate. Its function is as follows. DNA-dependent RNA polymerase catalyzes the transcription of DNA into RNA using the four ribonucleoside triphosphates as substrates. This chain is DNA-directed RNA polymerase subunit beta, found in Lobularia maritima (Sweet alyssum).